The following is a 318-amino-acid chain: Probable cell division protein WhiA (318 aa).

Residues 281 to 314 (SLKELGEMLSPPVGKSGVNHRLRRIEKIAEELSK) constitute a DNA-binding region (H-T-H motif).

It belongs to the WhiA family.

In terms of biological role, involved in cell division and chromosome segregation. This chain is Probable cell division protein WhiA, found in Clostridium tetani (strain Massachusetts / E88).